A 252-amino-acid chain; its full sequence is 3-dehydroquinate dehydratase (252 aa).

3-dehydroquinate-binding positions include 46 to 48 and arginine 82; that span reads EWR. Histidine 143 serves as the catalytic Proton donor/acceptor. The Schiff-base intermediate with substrate role is filled by lysine 170. The 3-dehydroquinate site is built by arginine 212, serine 231, and glutamine 235.

Belongs to the type-I 3-dehydroquinase family. In terms of assembly, homodimer.

The catalysed reaction is 3-dehydroquinate = 3-dehydroshikimate + H2O. The protein operates within metabolic intermediate biosynthesis; chorismate biosynthesis; chorismate from D-erythrose 4-phosphate and phosphoenolpyruvate: step 3/7. Its function is as follows. Involved in the third step of the chorismate pathway, which leads to the biosynthesis of aromatic amino acids. Catalyzes the cis-dehydration of 3-dehydroquinate (DHQ) and introduces the first double bond of the aromatic ring to yield 3-dehydroshikimate. The chain is 3-dehydroquinate dehydratase from Listeria monocytogenes serotype 4b (strain CLIP80459).